A 133-amino-acid chain; its full sequence is UPF0047 protein Rv2556c (133 aa).

The protein belongs to the UPF0047 family.

The protein is UPF0047 protein Rv2556c of Mycobacterium tuberculosis (strain ATCC 25618 / H37Rv).